The chain runs to 469 residues: MNPNQKIITIGSVSLTIATICFLMQIAILVTTVTLHFKQYECNSPPNNQVMLCEPTIIERNITEIVYLTNTTIEKEICPKLAEYRNWSKPQCKITGFAPFSKDNSIRLSAGGDIWVTREPYVSCDPDKCYQFALGQGTTLNNRHSNDTVHDRTPYRTLLMNELGVPFHLGTKQVCIAWSSSSCHDGKAWLHVCVTGHDENATASFIYDGRLVDSIGSWSKKILRTQESECVCINGTCTVVMTDGSASGRADTKILFIEEGKIVHISPLSGSAQHVEECSCYPRYSGVRCVCRDNWKGSNRPIVDINVKDYSIVSSYVCSGLVGDTPRKNDSSSSSHCLNPNNEEGGHGVKGWAFDDGNDVWMGRTISEKLRSGYETFKVIGGWSKPNSKLQINRQVIVDRGNRSGYSGIFSVEGKSCINRCFYVELIRGRKQETEVWWTSNSIVVFCGTSGTYGTGSWPDGADINLMPI.

The Intravirion segment spans residues 1–9 (MNPNQKIIT). The chain crosses the membrane as a helical span at residues 10-30 (IGSVSLTIATICFLMQIAILV). The segment at 11–33 (GSVSLTIATICFLMQIAILVTTV) is involved in apical transport and lipid raft association. The Virion surface segment spans residues 31 to 469 (TTVTLHFKQY…DGADINLMPI (439 aa)). The hypervariable stalk region stretch occupies residues 36–88 (HFKQYECNSPPNNQVMLCEPTIIERNITEIVYLTNTTIEKEICPKLAEYRNWS). N61, N70, and N86 each carry an N-linked (GlcNAc...) asparagine; by host glycan. Residues 91–469 (QCKITGFAPF…DGADINLMPI (379 aa)) are head of neuraminidase. Disulfide bonds link C92/C417, C124/C129, C183/C230, C232/C237, C278/C291, C280/C289, C318/C337, and C421/C447. Position 118 (R118) interacts with substrate. N146 carries an N-linked (GlcNAc...) asparagine; by host glycan. D151 acts as the Proton donor/acceptor in catalysis. Residue R152 coordinates substrate. N-linked (GlcNAc...) asparagine; by host glycosylation is found at N200 and N234. 276–277 (EE) is a substrate binding site. Position 292 (R292) interacts with substrate. D293, G297, and D324 together coordinate Ca(2+). Residue N329 is glycosylated (N-linked (GlcNAc...) asparagine; by host). R371 contacts substrate. N-linked (GlcNAc...) asparagine; by host glycosylation occurs at N402. The Nucleophile role is filled by Y406.

Belongs to the glycosyl hydrolase 34 family. As to quaternary structure, homotetramer. Requires Ca(2+) as cofactor. Post-translationally, N-glycosylated.

Its subcellular location is the virion membrane. The protein localises to the host apical cell membrane. The enzyme catalyses Hydrolysis of alpha-(2-&gt;3)-, alpha-(2-&gt;6)-, alpha-(2-&gt;8)- glycosidic linkages of terminal sialic acid residues in oligosaccharides, glycoproteins, glycolipids, colominic acid and synthetic substrates.. With respect to regulation, inhibited by the neuraminidase inhibitors zanamivir (Relenza) and oseltamivir (Tamiflu). These drugs interfere with the release of progeny virus from infected cells and are effective against all influenza strains. Resistance to neuraminidase inhibitors is quite rare. Its function is as follows. Catalyzes the removal of terminal sialic acid residues from viral and cellular glycoconjugates. Cleaves off the terminal sialic acids on the glycosylated HA during virus budding to facilitate virus release. Additionally helps virus spread through the circulation by further removing sialic acids from the cell surface. These cleavages prevent self-aggregation and ensure the efficient spread of the progeny virus from cell to cell. Otherwise, infection would be limited to one round of replication. Described as a receptor-destroying enzyme because it cleaves a terminal sialic acid from the cellular receptors. May facilitate viral invasion of the upper airways by cleaving the sialic acid moieties on the mucin of the airway epithelial cells. Likely to plays a role in the budding process through its association with lipid rafts during intracellular transport. May additionally display a raft-association independent effect on budding. Plays a role in the determination of host range restriction on replication and virulence. Sialidase activity in late endosome/lysosome traffic seems to enhance virus replication. This is Neuraminidase from Influenza A virus (strain A/Niigata/137/1996 H3N2).